Reading from the N-terminus, the 234-residue chain is Demethylmenaquinone methyltransferase (234 aa).

S-adenosyl-L-methionine is bound by residues Thr-58, Asp-79, and 104–105 (NA).

Belongs to the class I-like SAM-binding methyltransferase superfamily. MenG/UbiE family.

It carries out the reaction a 2-demethylmenaquinol + S-adenosyl-L-methionine = a menaquinol + S-adenosyl-L-homocysteine + H(+). Its pathway is quinol/quinone metabolism; menaquinone biosynthesis; menaquinol from 1,4-dihydroxy-2-naphthoate: step 2/2. Functionally, methyltransferase required for the conversion of demethylmenaquinol (DMKH2) to menaquinol (MKH2). This chain is Demethylmenaquinone methyltransferase, found in Lysinibacillus sphaericus (strain C3-41).